A 3184-amino-acid polypeptide reads, in one-letter code: MEILNLSIEFHIPDGNTLKKMVRVDNTTKIGEMSRLLLDKFGRSDFDPSQFQLIVPQKTATISFHVLSDLNKSLSSYNIKNNDELIFKKRQKKTNPGNAKLVSKKKPESIFKTLFSMSTLEMKLGEDKSAPEISEVENQIDDLGILFKALEILTNSFNQNKDIEDIVSSFQYVGNESEIADLVKIVLSNNDGLSSNSNNNSSSNIGSMLNSGGGGSGSNLGLGLSSGTGGSFNGNSSGSSSSSSYYYNNNNNNNNIELTAQQKNPKVLCSFILHLLQIIFSQTSLTYSLYITYLKTNNNNNNNNNNNSSSPSNTDLSRSTYFYDIPVKSRIILKHIMLFLYNLTQRDASLLDSLSNIIGPFILGNVLLDPPPPPPSNSSPPISKSTSNNNLNVSNYHNNNNNNNNSNSNLSNSGNGDESPDFQSQNLVKSYNRENSGNSLNSMLHQTSLPNNNNSNVVNNNNNNNNNNNNNNNNNNNNNNNNNNNNNNNNNINNNSTSSNNNNNNNSNNNNSQIPPLIQVRQPSSDFTTTSSGNLRSLSNTENSLCKKVAIDLIQNIPLYLLFSHLKIQQLEGEKILFSAENIFCVDKCNFPPNKAMLGEIWVTNFRIIFINSNSNSSTIPNSTSSTSISSFASTQNLSILSIMTLFGSYNGNGGSGPTNATLSGGGSTSSSSNLNTPITTSPIHTSTNSNGAILNPINNSLINSNNNNNNNNINNNINNNINNINNNINNINSNSNNNINSIINSNSNNNNNNNNLNKLSTLDNTEIPLSMIYRWKMVKTGSLYDSFKIYCKDFRCKIIGFQINSHVLVKFKDLLTKCSVPTLDTIFAYNSKESSFGNTECFPDHSLLQEYNRIGVSWDLWRTTTQSKLCEHYPPTSVVPKSVSDNIVVTSAYYRSYGFPVLAWSHPTQKSSITRATSPEDQNNGSSNYLLTPNSPNSSSSNLANNNNSNNNNINNNNNNNNNNNNNNNNNSNNNNNNNNNNNNNNNNNNNNNGGGSGSRSTTIDNGQTSILNKNISNTPLIQSPTPNLPPSQHSLNLLMSPQTSSPRIHQSISSSSIPQVCQEDIDFLRGILDIKSSSMLNVFDTGSGGSYSSTMIGCQIEFLNLPPPNKVRERFNRLLHLHLGNPDSEWSETIRFFWLDPLKPILSAAINIAMHVDQGRSVLIQNSSSGPDIELQLSSLAQILLDPYYRTMDGFKVLIEKEWLSYGYPFSKRCHHKTSDDGFSPIFMQFIFLVWQIWKEFPTHFQFNEYYLLTLLDNVYNSRFGTFLCNNYKERMENNVYSSTKSFWSFQQQNQSRFTNLFYRPSPSSSSSSSSSSSSLSNGYNSSVQHLKCLRVFQDTMWNEYFFRYCFKSSLAIEQFEDRIKLSLLDIEMTVNSAITSTANALLPFLETLDLSNLRLYYLPSESTLYHLVGLRELNLSKNNLNSISCSLSSLVKLEKLSFEENSITNLPIETVVLLAEKLTSLTELNLSSNQLIDLPIEFSMFSKSLKKLHLKNNRFSAIPEVLGMLENLIELDLSELDLSSSTNSGVGIPTKLSKLCILNLNQTRIVELPKEFGDLKSLEKLYLDFNSLVTLPHSFRQLTNLEELSLSFNSMTELPREVCFLINLKKLMIEGNQIQFLPNEISQLSKLMILNVCKNKLDSLPASIGQLSQLVSLNLNNNSQLVSLRPTMGLLSNLVELKLDGTRLKTPPPEIVSLGLKSILLYLKDLIKGQEQCYKMKLMIVGQENVGKTTLLKTLKEKKKKATPSGPNISTDGIAIDQWVFSCLFEELDETSQNGRLIKKKQDITLSIWDFAGQEIYYTTHQFFLSERSVYIVAWNCALAEEESRVEFWLQSITTRAKDAPIIIVGTHLDDVNRTTAKMQKKRMKEKYLIRYQNIKAIKLVSCTSGKGITSLREKLEALVQSQSNMGESLPRSYMLLENLVKEETKKRIIPTIPWTEFIQMGTICTITDEAELLRATMFLHQLGSLVYFPKEPGLKQFVILDPQWITTMLSSIITTKHSYAKDGILNHKSLKQIWRPPQYPTHLHPHLISLLEKFEISYNLSPDSTSFETGTSLIPSLLLNDRPAIFPSLWGSFNQLVRQFGRIYQFEFVPNGFFSRLMVRILNFARVEAKCYWKNGMILQHDEETIFLEMNNAKKSLSFTVRGGANSTTLSRDVIETIQSLLDDSFQLPTYVFVPCFHCIFLSLPQCYYFPLDVCENAAVKGTGYLKCLTYDANVRTDLLVPDLVMSNFTGAKIPFDQLMIEELIGEGGAALVYRARWQGQTVAVKKLKTIENLDSPIEINDISLSKAFNEFRRECWVMSELEHPNIVQLKGLCLDPLCIVTEYLPHGNLYSFLHKPEMEFSWLFRLKVALDISSGMAFLHSSTPPIIHRDLKSPNILLASINENAQTIAKVVDFGLSGLQHTITNRGVENPLWLAPEILNKTKEASTQTDVYAFGVILWELVTRKDYFGEIGFMTLIEEKVINGERPKIPEDCPEMYSKLIVECWQTDASQRPKFSEIEDRLIKIAEAMFPDIHLSNIYQQQQQQQQQQQQSSPSKSSSTSPIIKSLNLSTVSELGESSNQTPKQNITTTTTTTHSDHKRQLSTDSGSSYRNKSHDTISHSTSVASDLLDIDNTLTVATTPRNRSKTNDDNIINTSNGRIITNSINNSNSNNEQPLSPNSLLQHSQSQQQLENVGLSALLDALPNSPIVSSTAAPSTTSTNKKVMYTSIVGDSARTRRGSVSIQPFQNEFNRELLPNQGTIQCLIKVGGNGCQVWAGTGNGFISTWKIEGQEKYIQRLFEANKDKKRIHCLYPYMNTVWCGSADDSITIWDIDTYQKIKSYSVEGPSCITRVGNTMWVGTIVNTIHIYDLKKKTKYKGKISLDSPIECLLRRDQEVWVATLGNIARIDVNSLRVVQMTKAHERAIHAMIQVDDHVWTASSDGTIKVWSSTCQSVHTIENAHSSRIFTLELVGDFVWSGSWDTTIKIWSTKDYHLVSENSGKHKDAISSFVYISNDQPLQTNERPIQKQVWSGSWDSSICVWALPNDTNSRSNTIFSSDSQFNLNGGSSNSITNSNSNSNNNLNGNLNNSNNSINNNYNNNNNNNNNNNNNNNNNNNNNNNNNNNNNNNYYYSNNVNSPNQASQSAGHLGTIHEQTSPNSATPLSSTPPGSKGLMQRRTVSFMNVLERFSNDKNRK.

Residues 369–378 are compositionally biased toward pro residues; it reads DPPPPPPSNS. Disordered regions lie at residues 369–516 and 913–1013; these read DPPP…QIPP and SITR…TSIL. Positions 379-415 are enriched in low complexity; the sequence is SPPISKSTSNNNLNVSNYHNNNNNNNNSNSNLSNSGN. The segment covering 421–450 has biased composition (polar residues); the sequence is DFQSQNLVKSYNRENSGNSLNSMLHQTSLP. Residues 451–512 are compositionally biased toward low complexity; it reads NNNNSNVVNN…NNNNSNNNNS (62 aa). Residues 842-1348 enclose the Myotubularin phosphatase domain; that stretch reads CFPDHSLLQE…FQDTMWNEYF (507 aa). Polar residues predominate over residues 913–934; the sequence is SITRATSPEDQNNGSSNYLLTP. Over residues 935–993 the composition is skewed to low complexity; the sequence is NSPNSSSSNLANNNNSNNNNINNNNNNNNNNNNNNNNNSNNNNNNNNNNNNNNNNNNNN. A compositionally biased stretch (polar residues) spans 1000 to 1013; it reads SRSTTIDNGQTSIL. LRR repeat units follow at residues 1391-1412, 1416-1438, 1439-1460, 1467-1488, 1491-1512, 1514-1535, 1541-1563, 1564-1585, 1587-1608, 1610-1631, 1633-1654, 1656-1678, and 1680-1701; these read FLETLDLSNLRLYYLPSESTLY, GLRELNLSKNNLNSISCSLSSLV, KLEKLSFEENSITNLPIETVVL, SLTELNLSSNQLIDLPIEFSMF, SLKKLHLKNNRFSAIPEVLGML, NLIELDLSELDLSSSTNSGVGI, KLCILNLNQTRIVELPKEFGDLK, SLEKLYLDFNSLVTLPHSFRQL, NLEELSLSFNSMTELPREVCFL, NLKKLMIEGNQIQFLPNEISQL, KLMILNVCKNKLDSLPASIGQL, QLVSLNLNNNSQLVSLRPTMGLL, and NLVELKLDGTRLKTPPPEIVSL. Residues 1716-1910 form the Roc domain; it reads GQEQCYKMKL…EKLEALVQSQ (195 aa). Residues 1716–1910 are small GTPase-like; sequence GQEQCYKMKL…EKLEALVQSQ (195 aa). Residues 1729–1736, 1797–1801, and 1854–1857 contribute to the GTP site; these read GQENVGKT, DFAGQ, and THLD. The COR domain maps to 1918 to 2127; it reads PRSYMLLENL…KCYWKNGMIL (210 aa). A Protein kinase domain is found at 2247 to 2519; sequence LMIEELIGEG…RLIKIAEAMF (273 aa). Residues 2253–2261 and Lys-2274 each bind ATP; that span reads IGEGGAALV. Catalysis depends on Asp-2379, which acts as the Proton acceptor. 2 disordered regions span residues 2528-2609 and 2652-2671; these read YQQQ…TISH and NSINNSNSNNEQPLSPNSLL. The span at 2529–2555 shows a compositional bias: low complexity; sequence QQQQQQQQQQQQSSPSKSSSTSPIIKS. Residues 2556–2576 are compositionally biased toward polar residues; it reads LNLSTVSELGESSNQTPKQNI. WD repeat units follow at residues 2745–2785, 2790–2829, 2909–2947, 2949–2986, and 2990–3040; these read PNQG…KYIQ, ANKDKKRIHCLYPYMNTVWCGSADDSITIWDIDTYQKIKS, AHERAIHAMIQVDDHVWTASSDGTIKVWSSTCQSVHTIE, AHSSRIFTLELVGDFVWSGSWDTTIKIWSTKDYHLVSE, and KHKD…NSRS. Positions 3055–3126 are enriched in low complexity; it reads GSSNSITNSN…NYYYSNNVNS (72 aa). The tract at residues 3055–3164 is disordered; it reads GSSNSITNSN…TPPGSKGLMQ (110 aa). Positions 3141–3157 are enriched in polar residues; sequence HEQTSPNSATPLSSTPP.

It belongs to the protein kinase superfamily. TKL Ser/Thr protein kinase family. ROCO subfamily.

The enzyme catalyses L-seryl-[protein] + ATP = O-phospho-L-seryl-[protein] + ADP + H(+). It carries out the reaction L-threonyl-[protein] + ATP = O-phospho-L-threonyl-[protein] + ADP + H(+). In terms of biological role, may act as a serine/threonine-protein kinase and guanine-nucleotide releasing factor. Essential regulator of cytokinesis involved in the binding to actomyosin cytoskeleton. This chain is Probable serine/threonine-protein kinase pats1 (pats1), found in Dictyostelium discoideum (Social amoeba).